We begin with the raw amino-acid sequence, 184 residues long: Small ribosomal subunit protein uS4c (184 aa).

Residues 82–143 (MRLDNILFRL…KQRSKALIQN (62 aa)) form the S4 RNA-binding domain.

It belongs to the universal ribosomal protein uS4 family. As to quaternary structure, part of the 30S ribosomal subunit. Contacts protein S5. The interaction surface between S4 and S5 is involved in control of translational fidelity.

It localises to the plastid. It is found in the chloroplast. One of the primary rRNA binding proteins, it binds directly to 16S rRNA where it nucleates assembly of the body of the 30S subunit. Functionally, with S5 and S12 plays an important role in translational accuracy. This Patersonia fragilis (Short purple-flag) protein is Small ribosomal subunit protein uS4c (rps4).